Here is a 715-residue protein sequence, read N- to C-terminus: Polyribonucleotide nucleotidyltransferase (715 aa).

Positions 493 and 499 each coordinate Mg(2+). The region spanning 560–619 (PRMITVKINPEKIRDVIGKGGSVIRALTEETGTTIDISDDGVVTIASTSSEGMAEAKKRI) is the KH domain. The 69-residue stretch at 629–697 (GQVYEGTVLK…EKGRVRLSAK (69 aa)) folds into the S1 motif domain.

The protein belongs to the polyribonucleotide nucleotidyltransferase family. Mg(2+) serves as cofactor.

Its subcellular location is the cytoplasm. The catalysed reaction is RNA(n+1) + phosphate = RNA(n) + a ribonucleoside 5'-diphosphate. Involved in mRNA degradation. Catalyzes the phosphorolysis of single-stranded polyribonucleotides processively in the 3'- to 5'-direction. This is Polyribonucleotide nucleotidyltransferase from Burkholderia cenocepacia (strain HI2424).